Here is a 344-residue protein sequence, read N- to C-terminus: MLEQTDLSLEQLLKNYYETTNEKIVFVNRQGKIIAMNDAAKDILTEEDNYNAMTNAICHRCEGYSNEYDVQSCKDCFLETTQLQHSNFQVFMKTKDNEIKPFTAMYQNIDEQRGISAFTLQNVAPQIERQEKMYQQKMLHRSIQAQENERKRISRELHDSVIQDMLNIDVELRLLKYKHRDKVLAETSQRIEGLLSQLIDDIRNMSVELRPSSLDDLGIEAAFKSYFKQFEENYGMHIKYDSNIKGMRFDNEIETVVYRVVQEGVFNALKYAEVNEIEVSTHSDGKQLVAEVVDRGKGFSLDHHPKGSGLGLYGMRERAELVNGHVNIETHINRGTIITLDIPI.

[4Fe-4S] cluster contacts are provided by cysteine 58, cysteine 61, cysteine 73, and cysteine 76. The 198-residue stretch at 147 to 344 (ENERKRISRE…GTIITLDIPI (198 aa)) folds into the Histidine kinase domain. Histidine 158 is subject to Phosphohistidine; by autocatalysis.

Requires [4Fe-4S] cluster as cofactor. Autophosphorylated.

It is found in the cytoplasm. It carries out the reaction ATP + protein L-histidine = ADP + protein N-phospho-L-histidine.. Member of the two-component regulatory system NreB/NreC involved in the control of dissimilatory nitrate/nitrite reduction in response to oxygen. NreB functions as a direct oxygen sensor histidine kinase which is autophosphorylated, in the absence of oxygen, probably at the conserved histidine residue, and transfers its phosphate group probably to a conserved aspartate residue of NreC. NreB/NreC activates the expression of the nitrate (narGHJI) and nitrite (nir) reductase operons, as well as the putative nitrate transporter gene narT. The chain is Oxygen sensor histidine kinase NreB (nreB) from Staphylococcus epidermidis (strain ATCC 12228 / FDA PCI 1200).